The sequence spans 436 residues: Proteasome-activating nucleotidase (436 aa).

Positions 15-97 (EELCRLYRSL…LKSESEQLRS (83 aa)) form a coiled coil. Residues 222-227 (GTGKTL) and H361 contribute to the ATP site. Residues 434–436 (MFA) are docks into pockets in the proteasome alpha-ring to cause gate opening.

It belongs to the AAA ATPase family. In terms of assembly, homohexamer. The hexameric complex has a two-ring architecture resembling a top hat that caps the 20S proteasome core at one or both ends. Upon ATP-binding, the C-terminus of PAN interacts with the alpha-rings of the proteasome core by binding to the intersubunit pockets.

Its subcellular location is the cytoplasm. In terms of biological role, ATPase which is responsible for recognizing, binding, unfolding and translocation of substrate proteins into the archaeal 20S proteasome core particle. Is essential for opening the gate of the 20S proteasome via an interaction with its C-terminus, thereby allowing substrate entry and access to the site of proteolysis. Thus, the C-termini of the proteasomal ATPase function like a 'key in a lock' to induce gate opening and therefore regulate proteolysis. Unfolding activity requires energy from ATP hydrolysis, whereas ATP binding alone promotes ATPase-20S proteasome association which triggers gate opening, and supports translocation of unfolded substrates. The sequence is that of Proteasome-activating nucleotidase from Methanoregula boonei (strain DSM 21154 / JCM 14090 / 6A8).